The primary structure comprises 264 residues: MRIALGIEYNGTNYFGWQRQREVKSVQEELEKALSVVANHPVEVQCAGRTDAGVHGTGQVVHFDTNVSRKMVAWTMGANANMPSDIAVRWAVEVNDDFHARFSATARRYRYIIFNHALRPGILNSGVSHYHGELDEKKMHEAGQYLLGENDFSSFRAAHCQSLSPCRNMMHLNVTRHGDYIVIDIKANAFVHHMVRNITGSLIKVGRGEEKPEWIKSLLEAKDRKLAGATAKAEGLYLVDVDYPEEFGLPRVPIGPLFLPDNLN.

Aspartate 51 (nucleophile) is an active-site residue. Position 109 (tyrosine 109) interacts with substrate.

It belongs to the tRNA pseudouridine synthase TruA family. Homodimer.

It catalyses the reaction uridine(38/39/40) in tRNA = pseudouridine(38/39/40) in tRNA. Functionally, formation of pseudouridine at positions 38, 39 and 40 in the anticodon stem and loop of transfer RNAs. The polypeptide is tRNA pseudouridine synthase A (Vibrio campbellii (strain ATCC BAA-1116)).